A 1807-amino-acid polypeptide reads, in one-letter code: Vitellogenin-A2 (1807 aa).

The first 15 residues, 1–15 (MKGIVLALLLALAGS), serve as a signal peptide directing secretion. A Vitellogenin domain is found at 24 to 664 (FSESKISVYN…SANTMFPVFI (641 aa)). The disordered stretch occupies residues 953–974 (TSAEGASMMEDSSEMGPKKYSA). An N-linked (GlcNAc...) asparagine glycan is attached at Asn1094. Residues 1095–1320 (ETALYRSKQK…SSESSSSSSE (226 aa)) are disordered. The span at 1101–1111 (SKQKKKNKIHN) shows a compositional bias: basic residues. Residues 1112 to 1123 (RRLDAEVVEARK) show a composition bias toward basic and acidic residues. Residues 1126-1163 (SSLSSSSSSSSSSSSSSSSSSSSSSSSSPSSSSSSSYS) are compositionally biased toward low complexity. Residues 1187–1198 (QNKKRNLQENRK) show a composition bias toward basic and acidic residues. Residues 1205–1232 (SSSSSSSSSSSSSSSSSSSSSSSSSSSS) are compositionally biased toward low complexity. A compositionally biased stretch (basic and acidic residues) spans 1233–1247 (EENRPHKNRQHDNKQ). Low complexity-rich tracts occupy residues 1263–1276 (SESS…SSSE) and 1309–1320 (SSSSESSSSSSE). The region spanning 1536-1714 (GECKVAQDQI…SWILPAESCS (179 aa)) is the VWFD domain. Cystine bridges form between Cys1538/Cys1677 and Cys1561/Cys1713.

In terms of tissue distribution, produced by the liver, secreted into the blood and then sequestered by receptor mediated endocytosis into growing oocytes, where it is generally cleaved, giving rise to the respective yolk components.

Its function is as follows. Precursor of the major egg-yolk proteins that are sources of nutrients during early development of oviparous organisms. This Xenopus laevis (African clawed frog) protein is Vitellogenin-A2.